We begin with the raw amino-acid sequence, 147 residues long: Hemoglobin subunit beta-1 (147 aa).

Position 2 is an N-acetylvaline (V2). Positions 3–147 (HLTDAEKAAV…VATALAHKYH (145 aa)) constitute a Globin domain. K18 bears the N6-succinyllysine mark. Residues S21, S45, and S51 each carry the phosphoserine modification. K60 is modified (N6-succinyllysine). Heme b-binding residues include H64 and H93. Position 105 is an asymmetric dimethylarginine (R105). Phosphothreonine is present on T124.

It belongs to the globin family. As to quaternary structure, heterotetramer of two alpha chains and two beta chains. As to expression, red blood cells.

In terms of biological role, involved in oxygen transport from the lung to the various peripheral tissues. In Mus musculus (Mouse), this protein is Hemoglobin subunit beta-1 (Hbb-b1).